The chain runs to 212 residues: Uridine kinase (212 aa).

Residue glycine 13–serine 20 participates in ATP binding.

This sequence belongs to the uridine kinase family.

It is found in the cytoplasm. The catalysed reaction is uridine + ATP = UMP + ADP + H(+). It carries out the reaction cytidine + ATP = CMP + ADP + H(+). The protein operates within pyrimidine metabolism; CTP biosynthesis via salvage pathway; CTP from cytidine: step 1/3. It participates in pyrimidine metabolism; UMP biosynthesis via salvage pathway; UMP from uridine: step 1/1. This is Uridine kinase from Shewanella amazonensis (strain ATCC BAA-1098 / SB2B).